The sequence spans 139 residues: D-ribose pyranase (139 aa).

His-20 serves as the catalytic Proton donor. Residues Asp-28, His-106, and 128–130 each bind substrate; that span reads YAN.

Belongs to the RbsD / FucU family. RbsD subfamily. As to quaternary structure, homodecamer.

It localises to the cytoplasm. It catalyses the reaction beta-D-ribopyranose = beta-D-ribofuranose. Its pathway is carbohydrate metabolism; D-ribose degradation; D-ribose 5-phosphate from beta-D-ribopyranose: step 1/2. Catalyzes the interconversion of beta-pyran and beta-furan forms of D-ribose. This is D-ribose pyranase from Edwardsiella ictaluri (strain 93-146).